Consider the following 247-residue polypeptide: NAD(P)H-quinone oxidoreductase subunit K, chloroplastic (247 aa).

[4Fe-4S] cluster-binding residues include Cys61, Cys62, Cys126, and Cys157.

The protein belongs to the complex I 20 kDa subunit family. NDH is composed of at least 16 different subunits, 5 of which are encoded in the nucleus. The cofactor is [4Fe-4S] cluster.

It is found in the plastid. It localises to the chloroplast thylakoid membrane. It carries out the reaction a plastoquinone + NADH + (n+1) H(+)(in) = a plastoquinol + NAD(+) + n H(+)(out). It catalyses the reaction a plastoquinone + NADPH + (n+1) H(+)(in) = a plastoquinol + NADP(+) + n H(+)(out). NDH shuttles electrons from NAD(P)H:plastoquinone, via FMN and iron-sulfur (Fe-S) centers, to quinones in the photosynthetic chain and possibly in a chloroplast respiratory chain. The immediate electron acceptor for the enzyme in this species is believed to be plastoquinone. Couples the redox reaction to proton translocation, and thus conserves the redox energy in a proton gradient. This chain is NAD(P)H-quinone oxidoreductase subunit K, chloroplastic, found in Anthoceros angustus (Hornwort).